The chain runs to 315 residues: Gamma-hemolysin component C (315 aa).

The first 29 residues, 1–29, serve as a signal peptide directing secretion; the sequence is MLKNKILTTTLSVSLLAPLANPLLENAKA.

Belongs to the aerolysin family. In terms of assembly, toxicity requires sequential binding and synergistic association of a class S and a class F component which form heterooligomeric complexes. HlgB (class F) associates with either hlgA thus forming an AB toxin or with hlgC thus forming a CB toxin.

It localises to the secreted. In terms of biological role, toxin that seems to act by forming pores in the membrane of the cell. Has a hemolytic and a leucotoxic activity. The protein is Gamma-hemolysin component C (hlgC) of Staphylococcus aureus (strain NCTC 8325 / PS 47).